A 303-amino-acid chain; its full sequence is Mycothiol acetyltransferase (303 aa).

N-acetyltransferase domains are found at residues Met1 to Asp150 and Val162 to Arg303. Glu18 lines the 1D-myo-inositol 2-(L-cysteinylamino)-2-deoxy-alpha-D-glucopyranoside pocket. An acetyl-CoA-binding site is contributed by Leu77–Val79. 3 residues coordinate 1D-myo-inositol 2-(L-cysteinylamino)-2-deoxy-alpha-D-glucopyranoside: Glu189, Lys229, and Glu237. Residues Val241–Val243 and Gln248–Arg254 each bind acetyl-CoA. Residue Tyr275 coordinates 1D-myo-inositol 2-(L-cysteinylamino)-2-deoxy-alpha-D-glucopyranoside. An acetyl-CoA-binding site is contributed by Asn280–Lys285.

Belongs to the acetyltransferase family. MshD subfamily. In terms of assembly, monomer.

The catalysed reaction is 1D-myo-inositol 2-(L-cysteinylamino)-2-deoxy-alpha-D-glucopyranoside + acetyl-CoA = mycothiol + CoA + H(+). In terms of biological role, catalyzes the transfer of acetyl from acetyl-CoA to desacetylmycothiol (Cys-GlcN-Ins) to form mycothiol. The chain is Mycothiol acetyltransferase from Saccharopolyspora erythraea (strain ATCC 11635 / DSM 40517 / JCM 4748 / NBRC 13426 / NCIMB 8594 / NRRL 2338).